We begin with the raw amino-acid sequence, 386 residues long: 4-hydroxy-3-methylbut-2-en-1-yl diphosphate synthase (flavodoxin) (386 aa).

Positions 281, 284, 316, and 323 each coordinate [4Fe-4S] cluster.

The protein belongs to the IspG family. Requires [4Fe-4S] cluster as cofactor.

It catalyses the reaction (2E)-4-hydroxy-3-methylbut-2-enyl diphosphate + oxidized [flavodoxin] + H2O + 2 H(+) = 2-C-methyl-D-erythritol 2,4-cyclic diphosphate + reduced [flavodoxin]. The protein operates within isoprenoid biosynthesis; isopentenyl diphosphate biosynthesis via DXP pathway; isopentenyl diphosphate from 1-deoxy-D-xylulose 5-phosphate: step 5/6. Functionally, converts 2C-methyl-D-erythritol 2,4-cyclodiphosphate (ME-2,4cPP) into 1-hydroxy-2-methyl-2-(E)-butenyl 4-diphosphate. The polypeptide is 4-hydroxy-3-methylbut-2-en-1-yl diphosphate synthase (flavodoxin) (Corynebacterium jeikeium (strain K411)).